The chain runs to 497 residues: Succinate-semialdehyde dehydrogenase [NADP(+)] (497 aa).

Catalysis depends on glutamate 264, which acts as the Proton acceptor. The active-site Nucleophile is cysteine 298.

Belongs to the aldehyde dehydrogenase family. As to quaternary structure, homotetramer.

It is found in the cytoplasm. It catalyses the reaction succinate semialdehyde + NAD(+) + H2O = succinate + NADH + 2 H(+). The enzyme catalyses succinate semialdehyde + NADP(+) + H2O = succinate + NADPH + 2 H(+). Its pathway is amino-acid degradation; 4-aminobutanoate degradation. Inhibited by AMP, ADP anf ATP. Its function is as follows. Catalyzes the oxidation of succinate semialdehyde to succinate. Can utilize both NAD(+) or NADP(+) as a coenzyme, but has a 2.5-fold lower activity with NADP(+) than with NAD(+). Functions in a gamma-aminobutyrate (GABA) degradation pathway that allows growth utilizing GABA as a nitrogen source. Functions in the GABA shunt, which allows to bypass 2 reactions in the TCA cycle by removing alpha-ketoglutarate from the cycle and feeding succinate and NADH back into the cycle. This is Succinate-semialdehyde dehydrogenase [NADP(+)] from Saccharomyces cerevisiae (strain ATCC 204508 / S288c) (Baker's yeast).